A 122-amino-acid polypeptide reads, in one-letter code: Small ribosomal subunit protein bS6 (122 aa).

The protein belongs to the bacterial ribosomal protein bS6 family.

In terms of biological role, binds together with bS18 to 16S ribosomal RNA. The sequence is that of Small ribosomal subunit protein bS6 (rpsF) from Neisseria meningitidis serogroup B (strain ATCC BAA-335 / MC58).